The chain runs to 566 residues: 5'-AMP-activated protein kinase subunit gamma-2 (566 aa).

The interval Met-1–Pro-198 is disordered. The segment covering Ser-15–Asn-25 has biased composition (low complexity). Over residues Asn-54–Asp-64 the composition is skewed to basic and acidic residues. Phosphoserine occurs at positions 65, 71, 73, 90, 138, 143, 158, 161, and 162. 2 stretches are compositionally biased toward low complexity: residues Lys-132–Pro-144 and Thr-156–Gln-172. Residue Thr-165 is modified to Phosphothreonine. The segment covering Tyr-180–Ser-189 has biased composition (basic and acidic residues). A Phosphoserine modification is found at Ser-196. CBS domains are found at residues Pro-272–Met-332, Thr-354–Met-412, and Ile-427–Ile-489. ADP-binding positions include Arg-299, Met-314–Asp-319, Val-359, His-380–Arg-381, and Lys-399. Residues Arg-299, Met-314–Asp-319, Val-359, His-380, His-380–Arg-381, Lys-399, Thr-429, Ala-434, Ser-455–Ala-456, Ser-471–Asp-474, Arg-498, His-527, His-527–Arg-528, and Ser-543–Asp-546 contribute to the AMP site. Residues Arg-299, Met-314–Asp-319, Val-359, His-380–Arg-381, Arg-381, and Lys-399 each bind ATP. The short motif at Leu-367–Ile-388 is the AMPK pseudosubstrate element. Residues Ser-471–Asp-474, Arg-498, and His-527–Arg-528 contribute to the ADP site. Residues Ser-471–Asp-474, Arg-498, and His-527–Arg-528 each bind ATP. The CBS 4 domain maps to Tyr-501–Lys-559.

Belongs to the 5'-AMP-activated protein kinase gamma subunit family. In terms of assembly, AMPK is a heterotrimer of an alpha catalytic subunit (PRKAA1 or PRKAA2), a beta (PRKAB1 or PRKAB2) and a gamma non-catalytic subunits (PRKAG1, PRKAG2 or PRKAG3). Interacts with FNIP1 and FNIP2. Post-translationally, phosphorylated by ULK1; leading to negatively regulate AMPK activity and suggesting the existence of a regulatory feedback loop between ULK1 and AMPK. Glycosylated; O-GlcNAcylated by OGT, promoting the AMP-activated protein kinase (AMPK) activity.

In terms of biological role, AMP/ATP-binding subunit of AMP-activated protein kinase (AMPK), an energy sensor protein kinase that plays a key role in regulating cellular energy metabolism. In response to reduction of intracellular ATP levels, AMPK activates energy-producing pathways and inhibits energy-consuming processes: inhibits protein, carbohydrate and lipid biosynthesis, as well as cell growth and proliferation. AMPK acts via direct phosphorylation of metabolic enzymes, and by longer-term effects via phosphorylation of transcription regulators. Also acts as a regulator of cellular polarity by remodeling the actin cytoskeleton; probably by indirectly activating myosin. Gamma non-catalytic subunit mediates binding to AMP, ADP and ATP, leading to activate or inhibit AMPK: AMP-binding results in allosteric activation of alpha catalytic subunit (PRKAA1 or PRKAA2) both by inducing phosphorylation and preventing dephosphorylation of catalytic subunits. ADP also stimulates phosphorylation, without stimulating already phosphorylated catalytic subunit. ATP promotes dephosphorylation of catalytic subunit, rendering the AMPK enzyme inactive. The protein is 5'-AMP-activated protein kinase subunit gamma-2 (Prkag2) of Mus musculus (Mouse).